Reading from the N-terminus, the 149-residue chain is Urease accessory protein UreE (149 aa).

This sequence belongs to the UreE family.

The protein localises to the cytoplasm. Its function is as follows. Involved in urease metallocenter assembly. Binds nickel. Probably functions as a nickel donor during metallocenter assembly. The sequence is that of Urease accessory protein UreE from Ruegeria pomeroyi (strain ATCC 700808 / DSM 15171 / DSS-3) (Silicibacter pomeroyi).